The following is a 650-amino-acid chain: XK-related protein 4 (650 aa).

Residues 1–15 show a composition bias toward basic and acidic residues; the sequence is MAAKSDGRLKMKKSS. Residues 1–44 are disordered; sequence MAAKSDGRLKMKKSSDVAFTPLQNSDHSGSVQGLAPGLPSGSGA. The span at 21-31 shows a compositional bias: polar residues; the sequence is PLQNSDHSGSV. Helical transmembrane passes span 114 to 134 and 144 to 164; these read WILAAVAVYFADVGTDVWLAV and WFGLTLFFVVLGSLSVQVFSF. Residue Ser200 is modified to Phosphoserine. Residues 200–238 form a disordered region; it reads SAAGEGEARPSTPQRQASNASKSNIAAANSGSNSSGATR. Over residues 216-238 the composition is skewed to low complexity; the sequence is ASNASKSNIAAANSGSNSSGATR. 8 consecutive transmembrane segments (helical) span residues 248–268, 306–326, 331–351, 365–385, 396–418, 428–448, 457–477, and 487–507; these read CSFCIWLLQSLIHILQLGQIW, HLLATFLESAPQLVLQLCIIV, LQALQGFTAAASLVSLAWALA, KPISYMAVIIQFCWHFFTIAA, VFQLYFGIFIVLHWCIMTFWIVH, WEEIVFDMVVGIIYIFSWFNV, LFIYYFVILLENTALSALWYL, and FAIPALCVVFSSFLTGVVFML.

This sequence belongs to the XK family. As to quaternary structure, homodimer; homodimerization takes place upon caspase cleavage. Interacts with the processed C-terminus of XRCC4 (protein XRCC4, C-terminus); interaction promotes the phospholipid scramblase activity. Undergoes proteolytic processing by caspase-3 (CASP3), caspase-6 (CASP6) and caspase-7 (CASP7) to generate the XK-related protein 4, processed form, leading to its activation.

It is found in the cell membrane. The enzyme catalyses a 1,2-diacyl-sn-glycero-3-phospho-L-serine(in) = a 1,2-diacyl-sn-glycero-3-phospho-L-serine(out). Its activity is regulated as follows. Phospholipid scramblase activity is activated upon caspase cleavage to generate the XK-related protein 4, processed form. Does not act prior the onset of apoptosis. With respect to regulation, homodimerizes upon caspase cleavage. Phospholipid scramblase activity is activated following interaction with the processed C-terminus of XRCC4 (protein XRCC4, C-terminus). Functionally, phospholipid scramblase that promotes phosphatidylserine exposure on apoptotic cell surface. Phosphatidylserine is a specific marker only present at the surface of apoptotic cells and acts as a specific signal for engulfment. The sequence is that of XK-related protein 4 from Homo sapiens (Human).